We begin with the raw amino-acid sequence, 956 residues long: Outer capsid protein VP2 (956 aa).

It belongs to the orbivirus VP2 family.

It localises to the virion. Its function is as follows. The VP2 protein is one of the two proteins (with VP5) which constitute the virus particle outer capsid. It is the major target of the host immunogenic response. Responsible for viral attachment to target host cell, probably by binding to sialic acid. This attachment induces virion internalization predominantly through clathrin-dependent endocytosis. The chain is Outer capsid protein VP2 (Segment-2) from Bluetongue virus 11 (isolate USA) (BTV 11).